Here is a 597-residue protein sequence, read N- to C-terminus: Elongation factor 4 (597 aa).

Residues Asp-2–Lys-184 form the tr-type G domain. GTP-binding positions include Asp-14 to Thr-19 and Asn-131 to Asp-134.

The protein belongs to the TRAFAC class translation factor GTPase superfamily. Classic translation factor GTPase family. LepA subfamily.

Its subcellular location is the cell inner membrane. The enzyme catalyses GTP + H2O = GDP + phosphate + H(+). Functionally, required for accurate and efficient protein synthesis under certain stress conditions. May act as a fidelity factor of the translation reaction, by catalyzing a one-codon backward translocation of tRNAs on improperly translocated ribosomes. Back-translocation proceeds from a post-translocation (POST) complex to a pre-translocation (PRE) complex, thus giving elongation factor G a second chance to translocate the tRNAs correctly. Binds to ribosomes in a GTP-dependent manner. This is Elongation factor 4 from Burkholderia lata (strain ATCC 17760 / DSM 23089 / LMG 22485 / NCIMB 9086 / R18194 / 383).